Consider the following 221-residue polypeptide: Orotate phosphoribosyltransferase (221 aa).

K27 is a binding site for 5-phospho-alpha-D-ribose 1-diphosphate. Position 35-36 (35-36) interacts with orotate; sequence FF. 5-phospho-alpha-D-ribose 1-diphosphate is bound by residues 75–76, R102, K103, K106, H108, and 128–136; these read YK and DDVLTAGTA. Orotate-binding residues include T132 and R160.

This sequence belongs to the purine/pyrimidine phosphoribosyltransferase family. PyrE subfamily. In terms of assembly, homodimer. Mg(2+) is required as a cofactor.

The catalysed reaction is orotidine 5'-phosphate + diphosphate = orotate + 5-phospho-alpha-D-ribose 1-diphosphate. It participates in pyrimidine metabolism; UMP biosynthesis via de novo pathway; UMP from orotate: step 1/2. Catalyzes the transfer of a ribosyl phosphate group from 5-phosphoribose 1-diphosphate to orotate, leading to the formation of orotidine monophosphate (OMP). This is Orotate phosphoribosyltransferase from Dichelobacter nodosus (strain VCS1703A).